The chain runs to 103 residues: Small ribosomal subunit protein uS10 (103 aa).

Belongs to the universal ribosomal protein uS10 family. Part of the 30S ribosomal subunit.

In terms of biological role, involved in the binding of tRNA to the ribosomes. The polypeptide is Small ribosomal subunit protein uS10 (Stutzerimonas stutzeri (strain A1501) (Pseudomonas stutzeri)).